Consider the following 309-residue polypeptide: UDP-3-O-acyl-N-acetylglucosamine deacetylase (309 aa).

Zn(2+) contacts are provided by His78, His235, and Asp239. Catalysis depends on His262, which acts as the Proton donor.

Belongs to the LpxC family. Requires Zn(2+) as cofactor.

It carries out the reaction a UDP-3-O-[(3R)-3-hydroxyacyl]-N-acetyl-alpha-D-glucosamine + H2O = a UDP-3-O-[(3R)-3-hydroxyacyl]-alpha-D-glucosamine + acetate. It functions in the pathway glycolipid biosynthesis; lipid IV(A) biosynthesis; lipid IV(A) from (3R)-3-hydroxytetradecanoyl-[acyl-carrier-protein] and UDP-N-acetyl-alpha-D-glucosamine: step 2/6. Functionally, catalyzes the hydrolysis of UDP-3-O-myristoyl-N-acetylglucosamine to form UDP-3-O-myristoylglucosamine and acetate, the committed step in lipid A biosynthesis. The sequence is that of UDP-3-O-acyl-N-acetylglucosamine deacetylase from Syntrophotalea carbinolica (strain DSM 2380 / NBRC 103641 / GraBd1) (Pelobacter carbinolicus).